We begin with the raw amino-acid sequence, 573 residues long: Arylsulfatase I (573 aa).

Residues 1-23 (MHALSGFSLVSLLSLGYLSWDWA) form the signal peptide. Ca(2+) is bound by residues D55, D56, and C93. C93 serves as the catalytic Nucleophile. 3-oxoalanine (Cys) is present on C93. K147 contacts substrate. H149 is a catalytic residue. H239 contributes to the substrate binding site. 2 N-linked (GlcNAc...) asparagine glycosylation sites follow: N276 and N288. The Ca(2+) site is built by D297 and N298. Position 315 (K315) interacts with substrate. N466 and N496 each carry an N-linked (GlcNAc...) asparagine glycan. Residues 506–550 (AANPRAHPDFNGGAWGPWASDEDEEEEDEEEEGRARSFPRGRRKK) form a disordered region. Over residues 525 to 537 (SDEDEEEEDEEEE) the composition is skewed to acidic residues.

It belongs to the sulfatase family. It depends on Ca(2+) as a cofactor. The oxidation of Cys-93 residue to 3-oxoalanine (also known as C(alpha)-formylglycine) by SUMF1/Sulfatase-modifying factor 1, seems critical for catalytic activity.

It localises to the secreted. It is found in the endoplasmic reticulum. Displays arylsulfatase activity at neutral pH, when co-expressed with SUMF1; arylsulfatase activity is measured in the secretion medium of retinal cell line, but no activity is recorded when measured in cell extracts. The chain is Arylsulfatase I (Arsi) from Rattus norvegicus (Rat).